The primary structure comprises 121 residues: uncharacterized protein (121 aa).

A disordered region spans residues 1-121; the sequence is MGQVLSICSS…QQEREQIKWD (121 aa). Gly2 is lipidated: N-myristoyl glycine. Residue Cys8 is the site of S-palmitoyl cysteine attachment. 4 stretches are compositionally biased toward basic and acidic residues: residues 11-23, 73-83, 90-105, and 112-121; these read KSKE…EKPT, AAEKRNIEKKK, RQLE…EHLQ, and QQEREQIKWD.

It to yeast YGL108C. Myristoylated. In terms of processing, the N-myristoylated protein is further palmitoylated.

The protein resides in the cytoplasm. It is found in the cytosol. This is an uncharacterized protein from Schizosaccharomyces pombe (strain 972 / ATCC 24843) (Fission yeast).